We begin with the raw amino-acid sequence, 329 residues long: rRNA 2'-O-methyltransferase fibrillarin (329 aa).

The disordered stretch occupies residues 1–85 (MAFGAPRGRG…GGARGGARGG (85 aa)). The span at 13–84 (RGGFGGRGGS…RGGARGGARG (72 aa)) shows a compositional bias: gly residues. Residues 181-182 (TS), 200-201 (EF), 225-226 (DA), and 245-248 (DVAQ) contribute to the S-adenosyl-L-methionine site.

It belongs to the methyltransferase superfamily. Fibrillarin family. As to quaternary structure, component of box C/D small nucleolar ribonucleoprotein (snoRNP) particles that contain SNU13, NOP1, SIK1/NOP56 and NOP58, plus a guide RNA. By homology to other fibrillarins, some or all of the N-terminal domain arginines are modified to asymmetric dimethylarginine (DMA).

The protein localises to the nucleus. It localises to the nucleolus. The enzyme catalyses L-glutaminyl-[histone H2A] + S-adenosyl-L-methionine = N(5)-methyl-L-glutaminyl-[histone H2A] + S-adenosyl-L-homocysteine + H(+). S-adenosyl-L-methionine-dependent methyltransferase that has the ability to methylate both RNAs and proteins. Involved in pre-rRNA processing. Utilizes the methyl donor S-adenosyl-L-methionine to catalyze the site-specific 2'-hydroxyl methylation of ribose moieties in pre-ribosomal RNA. Site specificity is provided by a guide RNA that base pairs with the substrate. Methylation occurs at a characteristic distance from the sequence involved in base pairing with the guide RNA. Also acts as a protein methyltransferase by mediating methylation of 'Gln-105' of histone H2A (H2AQ105me), a modification that impairs binding of the FACT complex and is specifically present at 35S ribosomal DNA locus. The polypeptide is rRNA 2'-O-methyltransferase fibrillarin (NOP1) (Debaryomyces hansenii (strain ATCC 36239 / CBS 767 / BCRC 21394 / JCM 1990 / NBRC 0083 / IGC 2968) (Yeast)).